Here is a 334-residue protein sequence, read N- to C-terminus: Spermidine synthase 1 (334 aa).

The disordered stretch occupies residues 1 to 37 (MAAPENTLHSTDSPLKRQREDEVNGVSDTLSKEPQPN). Positions 26–37 (VSDTLSKEPQPN) are enriched in polar residues. In terms of domain architecture, PABS spans 44 to 281 (PGWFSEISPM…GMIGFMLCST (238 aa)). An S-adenosyl 3-(methylsulfanyl)propylamine-binding site is contributed by glutamine 75. Position 105 (tyrosine 105) interacts with putrescine. Residues glutamine 106, aspartate 130, glutamate 150, 181-182 (DG), and aspartate 200 contribute to the S-adenosyl 3-(methylsulfanyl)propylamine site. Aspartate 200 functions as the Proton acceptor in the catalytic mechanism. Putrescine-binding positions include 200–203 (DSSD) and tyrosine 269.

Belongs to the spermidine/spermine synthase family.

The enzyme catalyses S-adenosyl 3-(methylsulfanyl)propylamine + putrescine = S-methyl-5'-thioadenosine + spermidine + H(+). It participates in amine and polyamine biosynthesis; spermidine biosynthesis; spermidine from putrescine: step 1/1. The polypeptide is Spermidine synthase 1 (SPDSYN1) (Pisum sativum (Garden pea)).